The chain runs to 528 residues: Bifunctional dihydrofolate reductase-thymidylate synthase (528 aa).

The tract at residues 1 to 20 is disordered; that stretch reads MASELLANPTNGSGITRPDP. One can recognise a DHFR domain in the interval 23-200; it reads TYQVVVAATQ…IRYCFTTYVR (178 aa). Val27 contacts substrate. NADP(+)-binding positions include Ala29 and 35-41; that span reads GIGKDGK. Position 49 (Asp49) interacts with substrate. NADP(+)-binding positions include 73–75 and 94–97; these read RKT and LTRS. The substrate site is built by Ile136, Tyr142, and Thr157. 137-144 serves as a coordination point for NADP(+); sequence GGGQIYRE. Positions 202 to 528 are thymidylate synthase; the sequence is RNSVAELTSQ…HQKIEMKMAV (327 aa). Arg264 contacts dUMP. Cys409 is an active-site residue. DUMP contacts are provided by residues His410, 428-432, Asn440, and 470-472; these read QRSAD and HVY.

It in the N-terminal section; belongs to the dihydrofolate reductase family. The protein in the C-terminal section; belongs to the thymidylate synthase family.

It catalyses the reaction (6S)-5,6,7,8-tetrahydrofolate + NADP(+) = 7,8-dihydrofolate + NADPH + H(+). The enzyme catalyses dUMP + (6R)-5,10-methylene-5,6,7,8-tetrahydrofolate = 7,8-dihydrofolate + dTMP. The protein operates within cofactor biosynthesis; tetrahydrofolate biosynthesis; 5,6,7,8-tetrahydrofolate from 7,8-dihydrofolate: step 1/1. Its function is as follows. Bifunctional enzyme. Involved in de novo dTMP biosynthesis. Key enzyme in folate metabolism. Can play two different roles depending on the source of dihydrofolate: de novo synthesis of tetrahydrofolate or recycling of the dihydrofolate released as one of the end products of the TS catalyzed reaction. Catalyzes an essential reaction for de novo glycine and purine synthesis, DNA precursor synthesis, and for the conversion of dUMP to dTMP. In Daucus carota (Wild carrot), this protein is Bifunctional dihydrofolate reductase-thymidylate synthase.